The chain runs to 269 residues: 3-methyl-2-oxobutanoate hydroxymethyltransferase (269 aa).

Mg(2+) is bound by residues Asp-50 and Asp-89. Residues Asp-50–Ser-51, Asp-89, and Lys-119 contribute to the 3-methyl-2-oxobutanoate site. Glu-121 lines the Mg(2+) pocket. Catalysis depends on Glu-187, which acts as the Proton acceptor.

This sequence belongs to the PanB family. In terms of assembly, homodecamer; pentamer of dimers. Mg(2+) serves as cofactor.

Its subcellular location is the cytoplasm. The catalysed reaction is 3-methyl-2-oxobutanoate + (6R)-5,10-methylene-5,6,7,8-tetrahydrofolate + H2O = 2-dehydropantoate + (6S)-5,6,7,8-tetrahydrofolate. The protein operates within cofactor biosynthesis; (R)-pantothenate biosynthesis; (R)-pantoate from 3-methyl-2-oxobutanoate: step 1/2. Its function is as follows. Catalyzes the reversible reaction in which hydroxymethyl group from 5,10-methylenetetrahydrofolate is transferred onto alpha-ketoisovalerate to form ketopantoate. The sequence is that of 3-methyl-2-oxobutanoate hydroxymethyltransferase (panB) from Corynebacterium glutamicum (strain ATCC 13032 / DSM 20300 / JCM 1318 / BCRC 11384 / CCUG 27702 / LMG 3730 / NBRC 12168 / NCIMB 10025 / NRRL B-2784 / 534).